Reading from the N-terminus, the 274-residue chain is Nitrogenase iron protein (274 aa).

Residue 8-15 (GKGGIGKS) participates in ATP binding. C94 provides a ligand contact to [4Fe-4S] cluster. R97 is subject to ADP-ribosylarginine; by dinitrogenase reductase ADP-ribosyltransferase. A [4Fe-4S] cluster-binding site is contributed by C131.

It belongs to the NifH/BchL/ChlL family. As to quaternary structure, homodimer. [4Fe-4S] cluster serves as cofactor. Post-translationally, the reversible ADP-ribosylation of Arg-97 inactivates the nitrogenase reductase and regulates nitrogenase activity.

It carries out the reaction N2 + 8 reduced [2Fe-2S]-[ferredoxin] + 16 ATP + 16 H2O = H2 + 8 oxidized [2Fe-2S]-[ferredoxin] + 2 NH4(+) + 16 ADP + 16 phosphate + 6 H(+). Functionally, the key enzymatic reactions in nitrogen fixation are catalyzed by the nitrogenase complex, which has 2 components: the iron protein and the molybdenum-iron protein. In Azobacteroides pseudotrichonymphae genomovar. CFP2, this protein is Nitrogenase iron protein.